A 556-amino-acid chain; its full sequence is 2-succinyl-5-enolpyruvyl-6-hydroxy-3-cyclohexene-1-carboxylate synthase (556 aa).

It belongs to the TPP enzyme family. MenD subfamily. As to quaternary structure, homodimer. The cofactor is Mg(2+). It depends on Mn(2+) as a cofactor. Thiamine diphosphate serves as cofactor.

It carries out the reaction isochorismate + 2-oxoglutarate + H(+) = 5-enolpyruvoyl-6-hydroxy-2-succinyl-cyclohex-3-ene-1-carboxylate + CO2. The protein operates within quinol/quinone metabolism; 1,4-dihydroxy-2-naphthoate biosynthesis; 1,4-dihydroxy-2-naphthoate from chorismate: step 2/7. It functions in the pathway quinol/quinone metabolism; menaquinone biosynthesis. In terms of biological role, catalyzes the thiamine diphosphate-dependent decarboxylation of 2-oxoglutarate and the subsequent addition of the resulting succinic semialdehyde-thiamine pyrophosphate anion to isochorismate to yield 2-succinyl-5-enolpyruvyl-6-hydroxy-3-cyclohexene-1-carboxylate (SEPHCHC). In Mycobacterium leprae (strain Br4923), this protein is 2-succinyl-5-enolpyruvyl-6-hydroxy-3-cyclohexene-1-carboxylate synthase.